Here is a 238-residue protein sequence, read N- to C-terminus: Ribosomal RNA small subunit methyltransferase G (238 aa).

S-adenosyl-L-methionine contacts are provided by residues Gly78, Phe83, 129–130 (AE), and Arg148. Positions 217–238 (KKKETPKKYPRKAGTPAKSPIK) are disordered.

Belongs to the methyltransferase superfamily. RNA methyltransferase RsmG family.

It localises to the cytoplasm. In terms of biological role, specifically methylates the N7 position of a guanine in 16S rRNA. The sequence is that of Ribosomal RNA small subunit methyltransferase G from Lactococcus lactis subsp. cremoris (strain SK11).